The sequence spans 452 residues: Transcription factor SMP1 (452 aa).

The MADS-box domain occupies 3 to 57 (RRKIEIEPIKDDRNRTVTFIKRKAGLFKKAHELSVLCQVDIAVIILGSNNTFYEY). Residues 58–87 (SSVDMSNLLNVHQNNTDLPHNIIEPSDYGD) constitute a DNA-binding region (mef2-type). A disordered region spans residues 97-142 (NERKRRRRRATVLQPASHSGSCTVSSQDSSSVQNNGNLSAPLASND). The span at 115–127 (SGSCTVSSQDSSS) shows a compositional bias: low complexity.

It belongs to the MEF2 family. Can heterodimerize with RLM1. Interacts with HOG1. Post-translationally, phosphorylated by HOG1.

It localises to the nucleus. Functionally, transcription factor that controls part of the HOG1-mediated osmostress responses. Binds to the DNA sequence 5'-ACTACTA[TA](4)TAG-3'. Does not appear to function in the MPK1 pathway. The chain is Transcription factor SMP1 (SMP1) from Saccharomyces cerevisiae (strain ATCC 204508 / S288c) (Baker's yeast).